We begin with the raw amino-acid sequence, 129 residues long: Ribonuclease P protein component (129 aa).

This sequence belongs to the RnpA family. Consists of a catalytic RNA component (M1 or rnpB) and a protein subunit.

The enzyme catalyses Endonucleolytic cleavage of RNA, removing 5'-extranucleotides from tRNA precursor.. In terms of biological role, RNaseP catalyzes the removal of the 5'-leader sequence from pre-tRNA to produce the mature 5'-terminus. It can also cleave other RNA substrates such as 4.5S RNA. The protein component plays an auxiliary but essential role in vivo by binding to the 5'-leader sequence and broadening the substrate specificity of the ribozyme. The sequence is that of Ribonuclease P protein component from Corynebacterium jeikeium (strain K411).